Consider the following 655-residue polypeptide: p-hydroxybenzoic acid efflux pump subunit AaeB (655 aa).

The next 11 helical transmembrane spans lie at 13–33 (FAVK…HFQL), 38–58 (WAVL…GGEP), 69–89 (LRII…IAMI), 93–113 (LLMI…SSLV), 121–141 (WGLA…EPLL), 152–172 (EIVI…PRSI), 370–390 (LFWL…IAVV), 407–427 (FIYG…VIIP), 431–451 (QSML…GIEV), 459–479 (MGAL…TFHF), and 482–502 (FLDS…VILL).

Belongs to the aromatic acid exporter ArAE (TC 2.A.85) family.

Its subcellular location is the cell inner membrane. Forms an efflux pump with AaeA. Could function as a metabolic relief valve, allowing to eliminate certain compounds when they accumulate to high levels in the cell. This Shigella boydii serotype 18 (strain CDC 3083-94 / BS512) protein is p-hydroxybenzoic acid efflux pump subunit AaeB.